The following is a 318-amino-acid chain: Pantothenate kinase (318 aa).

Residue 96–103 (GSVAVGKS) coordinates ATP.

It belongs to the prokaryotic pantothenate kinase family.

The protein localises to the cytoplasm. The catalysed reaction is (R)-pantothenate + ATP = (R)-4'-phosphopantothenate + ADP + H(+). It participates in cofactor biosynthesis; coenzyme A biosynthesis; CoA from (R)-pantothenate: step 1/5. The chain is Pantothenate kinase from Bradyrhizobium diazoefficiens (strain JCM 10833 / BCRC 13528 / IAM 13628 / NBRC 14792 / USDA 110).